The primary structure comprises 374 residues: Putative G-protein coupled receptor-like protein B0244.6 (374 aa).

Residues 1–54 (MTQNHYTTSIFANCSKHYEFEILLETCTNSTNPCHAVSQIQSAITIAYVDYYTS) lie on the Extracellular side of the membrane. The chain crosses the membrane as a helical span at residues 55–75 (VALFSIAALLDIYCLIITIPL). Over 76–86 (YRRMKDDSKKK) the chain is Cytoplasmic. The chain crosses the membrane as a helical span at residues 87 to 107 (YVFLITRCISGLLLVVAWLLI). Topologically, residues 108–137 (QCIYLRFIAPSQDNLPYYVLALALNIGSTY) are extracellular. A helical transmembrane segment spans residues 138–158 (VLLGSYVGMAGILYLGVLNPI). The Cytoplasmic segment spans residues 159–169 (AFNQHLTLRIV). A helical transmembrane segment spans residues 170-190 (YIAVCIIFVISIFISIPLAIF). Over 191-216 (QALMTVPTSSMSCTDTACAPLITLIN) the chain is Extracellular. The helical transmembrane segment at 217–237 (FVLVFGSLITTTLTLTFVLIS) threads the bilayer. Residues 238–262 (LCRHRKEFKKLDTTSNTSLNSAVRL) lie on the Cytoplasmic side of the membrane. A helical membrane pass occupies residues 263–283 (LKFTLFAVLLLVAAEVIPFVI). The Extracellular segment spans residues 284 to 304 (SETKKKHSVVTGCYYFYHSGK). A helical membrane pass occupies residues 305–325 (VIQYAVFALTESSIWSIALII). Residues 326 to 374 (DPLINIIFDRTVSKKATDQVKWMRKSCVGLVRKVTKRSNPENFTETSEI) lie on the Cytoplasmic side of the membrane.

It belongs to the G-protein coupled receptor 1 family. B0244 subfamily.

Its subcellular location is the cell membrane. This Caenorhabditis elegans protein is Putative G-protein coupled receptor-like protein B0244.6.